A 105-amino-acid polypeptide reads, in one-letter code: Flagellar transcriptional regulator FlhD (105 aa).

This sequence belongs to the FlhD family. Homodimer; disulfide-linked. Forms a heterohexamer composed of two FlhC and four FlhD subunits. Each FlhC binds a FlhD dimer, forming a heterotrimer, and a hexamer assembles by dimerization of two heterotrimers.

It is found in the cytoplasm. Functions in complex with FlhC as a master transcriptional regulator that regulates transcription of several flagellar and non-flagellar operons by binding to their promoter region. Activates expression of class 2 flagellar genes, including fliA, which is a flagellum-specific sigma factor that turns on the class 3 genes. Also regulates genes whose products function in a variety of physiological pathways. In Nitrosomonas europaea (strain ATCC 19718 / CIP 103999 / KCTC 2705 / NBRC 14298), this protein is Flagellar transcriptional regulator FlhD.